A 469-amino-acid chain; its full sequence is 3-isopropylmalate dehydratase large subunit (469 aa).

Residues Cys350, Cys410, and Cys413 each coordinate [4Fe-4S] cluster.

This sequence belongs to the aconitase/IPM isomerase family. LeuC type 1 subfamily. Heterodimer of LeuC and LeuD. [4Fe-4S] cluster is required as a cofactor.

The enzyme catalyses (2R,3S)-3-isopropylmalate = (2S)-2-isopropylmalate. It participates in amino-acid biosynthesis; L-leucine biosynthesis; L-leucine from 3-methyl-2-oxobutanoate: step 2/4. Catalyzes the isomerization between 2-isopropylmalate and 3-isopropylmalate, via the formation of 2-isopropylmaleate. The polypeptide is 3-isopropylmalate dehydratase large subunit (Mesorhizobium japonicum (strain LMG 29417 / CECT 9101 / MAFF 303099) (Mesorhizobium loti (strain MAFF 303099))).